The chain runs to 197 residues: Holliday junction branch migration complex subunit RuvA (197 aa).

Positions 1–63 (MYAYLKGIIT…EDAHLLYGFR (63 aa)) are domain I. The tract at residues 64-142 (SEDEKKLFLS…VAGDDLPAKV (79 aa)) is domain II. A flexible linker region spans residues 143-147 (AVQAS). A domain III region spans residues 148-197 (AENQELEEAMEAMLALGYKATELKKIKKFFEGTTDTAENYIKSALKMLVK).

Belongs to the RuvA family. Homotetramer. Forms an RuvA(8)-RuvB(12)-Holliday junction (HJ) complex. HJ DNA is sandwiched between 2 RuvA tetramers; dsDNA enters through RuvA and exits via RuvB. An RuvB hexamer assembles on each DNA strand where it exits the tetramer. Each RuvB hexamer is contacted by two RuvA subunits (via domain III) on 2 adjacent RuvB subunits; this complex drives branch migration. In the full resolvosome a probable DNA-RuvA(4)-RuvB(12)-RuvC(2) complex forms which resolves the HJ.

It localises to the cytoplasm. The RuvA-RuvB-RuvC complex processes Holliday junction (HJ) DNA during genetic recombination and DNA repair, while the RuvA-RuvB complex plays an important role in the rescue of blocked DNA replication forks via replication fork reversal (RFR). RuvA specifically binds to HJ cruciform DNA, conferring on it an open structure. The RuvB hexamer acts as an ATP-dependent pump, pulling dsDNA into and through the RuvAB complex. HJ branch migration allows RuvC to scan DNA until it finds its consensus sequence, where it cleaves and resolves the cruciform DNA. The protein is Holliday junction branch migration complex subunit RuvA of Streptococcus pneumoniae (strain Hungary19A-6).